Here is a 339-residue protein sequence, read N- to C-terminus: Phenylalanine--tRNA ligase alpha subunit (339 aa).

Glu-250 serves as a coordination point for Mg(2+).

It belongs to the class-II aminoacyl-tRNA synthetase family. Phe-tRNA synthetase alpha subunit type 1 subfamily. As to quaternary structure, tetramer of two alpha and two beta subunits. Mg(2+) serves as cofactor.

The protein localises to the cytoplasm. The catalysed reaction is tRNA(Phe) + L-phenylalanine + ATP = L-phenylalanyl-tRNA(Phe) + AMP + diphosphate + H(+). In Flavobacterium johnsoniae (strain ATCC 17061 / DSM 2064 / JCM 8514 / BCRC 14874 / CCUG 350202 / NBRC 14942 / NCIMB 11054 / UW101) (Cytophaga johnsonae), this protein is Phenylalanine--tRNA ligase alpha subunit.